Reading from the N-terminus, the 872-residue chain is MKELSSAQIRQMWLDFWKSKGHSVEPSANLVPVNDPTLLWINSGVATLKKYFDGSVIPENPRITNAQKSIRTNDIENVGKTARHHTMFEMLGNFSIGDYFRDEAIEWGFELLTSPEWFDFPKDKLYMTYYPDDKDSYNRWIACGVEPSHLVPIEDNFWEIGAGPSGPDTEIFFDRGEDFDPENIGLRLLAEDIENDRYIEIWNIVLSQFNADPAVPRSEYKELPNKNIDTGAGLERLAAVMQGAKTNFETDLFMPIIREVEKLSGKTYDPDGDNMSFKVIADHIRALSFAIGDGALPGNEGRGYVLRRLLRRAVMHGRRLGINETFLYKLVPTVGQIMESYYPEVLEKRDFIEKIVKREEETFARTIDAGSGHLDSLLAQLKAEGKDTLEGKDIFKLYDTYGFPVELTEELAEDADYKIDHEGFKAAMKEQQDRARAAVVKGGSMGMQNETLAGIVEESRFDYGADSLESNLSVIIADNERTEAVSEGQALLVFAQTPFYAEMGGQVADHGVIKNDKGDTVAEVVDVQKAPNGQPLHTVNVLASLSVGTNYTLEINKERRLAVEKNHTATHLLHAALHNVIGEHATQAGSLNEEEFLRFDFTHFEAVSNEELRHIEQEVNEQIWNDLTITTTETDVETAKEMGAMALFGEKYGKVVRVVQIGNYSVELCGGTHLNNSSEIGLFKIVKEEGIGSGTRRIIAVTGRQAFEAYRNQEDALKEIAATVKAPQLKDAAAKVQALSDSLRDLQKENVELKEKAAAAAAGDVFKDIQEAKGVRFIASQVDVADAGALRTFADNWKQKDYSDVLVLVAAIGEKVNVLVASKTKDVHAGNMIKGLAPIVAGRGGGKPDMAMAGGSDASKIAELLAAVAENL.

Residues histidine 567, histidine 571, cysteine 669, and histidine 673 each coordinate Zn(2+).

It belongs to the class-II aminoacyl-tRNA synthetase family. Zn(2+) serves as cofactor.

It is found in the cytoplasm. The catalysed reaction is tRNA(Ala) + L-alanine + ATP = L-alanyl-tRNA(Ala) + AMP + diphosphate. Functionally, catalyzes the attachment of alanine to tRNA(Ala) in a two-step reaction: alanine is first activated by ATP to form Ala-AMP and then transferred to the acceptor end of tRNA(Ala). Also edits incorrectly charged Ser-tRNA(Ala) and Gly-tRNA(Ala) via its editing domain. This is Alanine--tRNA ligase from Streptococcus agalactiae serotype Ia (strain ATCC 27591 / A909 / CDC SS700).